A 446-amino-acid chain; its full sequence is Glycine--tRNA ligase (446 aa).

The substrate site is built by Arg-100 and Glu-158. ATP-binding positions include 190 to 192, 200 to 205, 275 to 276, and 319 to 322; these read RNE, FRTREF, EL, and GIER. Position 205-209 (205-209) interacts with substrate; sequence FEQFE. 315–319 lines the substrate pocket; the sequence is EPAVG.

It belongs to the class-II aminoacyl-tRNA synthetase family. As to quaternary structure, homodimer.

It is found in the cytoplasm. The catalysed reaction is tRNA(Gly) + glycine + ATP = glycyl-tRNA(Gly) + AMP + diphosphate. In terms of biological role, catalyzes the attachment of glycine to tRNA(Gly). This chain is Glycine--tRNA ligase, found in Mycoplasma genitalium (strain ATCC 33530 / DSM 19775 / NCTC 10195 / G37) (Mycoplasmoides genitalium).